A 439-amino-acid chain; its full sequence is D-inositol 3-phosphate glycosyltransferase (439 aa).

H21 is a 1D-myo-inositol 3-phosphate binding site. UDP-N-acetyl-alpha-D-glucosamine contacts are provided by residues 27-28 (QP) and G35. Residues 32-37 (DAGGMN), K90, Y123, T147, and R167 each bind 1D-myo-inositol 3-phosphate. The UDP-N-acetyl-alpha-D-glucosamine site is built by R241, K246, and Q299. 3 residues coordinate Mg(2+): Y308, R309, and A311. UDP-N-acetyl-alpha-D-glucosamine contacts are provided by E321 and E329. T335 contacts Mg(2+).

The protein belongs to the glycosyltransferase group 1 family. MshA subfamily. Homodimer.

It catalyses the reaction 1D-myo-inositol 3-phosphate + UDP-N-acetyl-alpha-D-glucosamine = 1D-myo-inositol 2-acetamido-2-deoxy-alpha-D-glucopyranoside 3-phosphate + UDP + H(+). Its function is as follows. Catalyzes the transfer of a N-acetyl-glucosamine moiety to 1D-myo-inositol 3-phosphate to produce 1D-myo-inositol 2-acetamido-2-deoxy-glucopyranoside 3-phosphate in the mycothiol biosynthesis pathway. In Mycobacterium sp. (strain KMS), this protein is D-inositol 3-phosphate glycosyltransferase.